The chain runs to 229 residues: Dephospho-CoA kinase domain-containing protein (229 aa).

A DPCK domain is found at 3 to 207 (LVGLTGGIAS…DCMQFLIIRA (205 aa)). 8–15 (GGIASGKS) provides a ligand contact to ATP.

Belongs to the CoaE family.

This chain is Dephospho-CoA kinase domain-containing protein (dcakd), found in Danio rerio (Zebrafish).